Reading from the N-terminus, the 339-residue chain is D-glycero-alpha-D-manno-heptose 7-phosphate kinase (339 aa).

Gly-17–Asp-20 contributes to the substrate binding site. Residues Ser-57 and Gly-110–Ser-116 each bind ATP. Mg(2+) contacts are provided by Ser-116 and Glu-148. The active-site Proton acceptor is Asp-160.

Belongs to the GHMP kinase family.

The catalysed reaction is D-glycero-alpha-D-manno-heptose 7-phosphate + ATP = D-glycero-alpha-D-manno-heptose 1,7-bisphosphate + ADP + H(+). The protein operates within nucleotide-sugar biosynthesis; GDP-D-glycero-alpha-D-manno-heptose biosynthesis; GDP-D-glycero-alpha-D-manno-heptose from D-glycero-alpha-D-manno-heptose 7-phosphate: step 1/3. It functions in the pathway capsule biogenesis; capsule polysaccharide biosynthesis. Catalyzes the phosphorylation of D-glycero-alpha-D-manno-heptose 7-phosphate at the C-1 position to form D-glycero-alpha-D-manno-heptose 1,7-bisphosphate. This chain is D-glycero-alpha-D-manno-heptose 7-phosphate kinase, found in Campylobacter jejuni subsp. jejuni serotype O:2 (strain ATCC 700819 / NCTC 11168).